The sequence spans 598 residues: MVVHTGNRLNKLRELMKERGYTLYVVPSEDAHSSEYTCDADARRAFISGFDGSAGCAVIGETSAALFTDGRYFNQASQQLDENWTLMKQGFTGVPTWEEYCTQMTKCNEKVGIDSSLITFPAAKALRESLFLKSGAVLVGDHDNLVDIVWGASRPKEPLEKLIVQEIKYAGLGVDEKLHNLREAMKEQKIEAFVVSMLDEVAWLYNLRGADVPYNPVFFAYSLVTLDEAFLYVDERKVTPEVSKHLDGFVKILPYDRVFSDAKNSNLTRIGISSKTSWCIATSFGETKVMPILSPISQAKGIKNDAELKGMKECHIRDGCALVEYFAWLDEYLNSGNKINEFDAATKLEQFRRKNNLFMGLSFETISSTGPNGAVIHYSPPATGSAIIDPTKIYLCDSGAQYKDGTTDVTRTWHFGEPSEFERQTATLALKGHIALANIVFPKGTTGYMIDVLARQYLWKYGLDYLHGTGHGVGSFLNVHELPVGIGSREVFNSAPLQAGMVTSNEPGFYEDGHFGYRVENCVYITEVNTENRFAGRTYLGLKDLTLAPHCQKLIDPSLLSPEEVKYLNEYHSEVYTTLSPMLSVSAKKWLSKHTSPI.

Mn(2+) is bound by residues Asp397, Asp408, Glu506, and Glu520.

The protein belongs to the peptidase M24B family. Mn(2+) serves as cofactor.

This is an uncharacterized protein from Schizosaccharomyces pombe (strain 972 / ATCC 24843) (Fission yeast).